Here is a 235-residue protein sequence, read N- to C-terminus: Adenosine 5'-phosphosulfate reductase (235 aa).

[4Fe-4S] cluster-binding residues include C121, C122, C204, and C207. The Nucleophile; cysteine thiosulfonate intermediate role is filled by C230.

It belongs to the PAPS reductase family. CysH subfamily. Requires [4Fe-4S] cluster as cofactor.

The protein resides in the cytoplasm. The enzyme catalyses [thioredoxin]-disulfide + sulfite + AMP + 2 H(+) = adenosine 5'-phosphosulfate + [thioredoxin]-dithiol. It functions in the pathway sulfur metabolism; hydrogen sulfide biosynthesis; sulfite from sulfate. Catalyzes the formation of sulfite from adenosine 5'-phosphosulfate (APS) using thioredoxin as an electron donor. This Geobacillus kaustophilus (strain HTA426) protein is Adenosine 5'-phosphosulfate reductase.